Reading from the N-terminus, the 131-residue chain is Squamosa promoter-binding-like protein 3 (131 aa).

The span at 1–17 (MSMRRSKAEGKRSLREL) shows a compositional bias: basic and acidic residues. Residues 1-54 (MSMRRSKAEGKRSLRELSEEEEEEEETEDEDTFEEEEALEKKQKGKATSSSGVC) form a disordered region. Residues 18 to 38 (SEEEEEEEETEDEDTFEEEEA) show a composition bias toward acidic residues. The segment at 45–129 (GKATSSSGVC…GHNERRRKST (85 aa)) is sufficient and necessary for DNA binding. The SBP-type zinc finger occupies 51–128 (SGVCQVESCT…AGHNERRRKS (78 aa)). The Zn(2+) site is built by C54, C59, C76, H79, C95, C98, H102, and C114. Residues 111–127 (KRSCRRRLAGHNERRRK) carry the Bipartite nuclear localization signal motif.

Zn(2+) serves as cofactor. In terms of tissue distribution, expressed in vegetative and inflorescence apical meristems, floral meristems, leaf and flower organ primordia, inflorescence stem tissue and to lower extent in roots.

Its subcellular location is the nucleus. It localises to the cytoplasm. Its function is as follows. Trans-acting factor that binds specifically to the consensus nucleotide sequence 5'-TNCGTACAA-3' of AP1 promoter. Binds specifically to the 5'-GTAC-3' core sequence. Promotes both vegetative phase change and flowering. Regulates phase-specific patterns of leaf epidermal differentiation and flowering time, but does not seem to affect leaf shape. The sequence is that of Squamosa promoter-binding-like protein 3 (SPL3) from Arabidopsis thaliana (Mouse-ear cress).